The following is an 89-amino-acid chain: Acyl-CoA-binding protein (89 aa).

The ACB domain maps to 3 to 88 (LKEEFEEHAE…VKQLFEAAGS (86 aa)). An acyl-CoA contacts are provided by residues 30-34 (YGLYK), lysine 56, and tyrosine 75.

Belongs to the ACBP family.

In terms of biological role, binds medium- and long-chain acyl-CoA esters with very high affinity and may function as an intracellular carrier of acyl-CoA esters. This Gossypium hirsutum (Upland cotton) protein is Acyl-CoA-binding protein.